Reading from the N-terminus, the 350-residue chain is TLC domain-containing protein fld-1 (350 aa).

A helical membrane pass occupies residues 9-29 (TDLLGPVPTMFLWVIVSFAFF). Residues 65–100 (GQEAENTENPPENEAEAGEQVEQEPEPDSRDLSAIP) form a disordered region. Over residues 75–90 (PENEAEAGEQVEQEPE) the composition is skewed to acidic residues. Positions 102-279 (NKKWRISNEC…IINGLVIASL (178 aa)) constitute a TLC domain. The next 6 membrane-spanning stretches (helical) occupy residues 111-131 (CVSLFHSVISGLWAAYALLYY), 145-165 (VAINLVLMSAGYLFHDLVDLL), 173-193 (IIELLFHHVVVLSAFAVTMFF), 195-215 (RFLGVVVFGLLMELNSIFLHS), 229-249 (PSFRIIALLNMVTLFAFRLCV), and 270-292 (IINGLVIASLASTNTVLTYRLLA).

Ubiquitously expressed.

The protein resides in the cell membrane. Its function is as follows. Regulates the composition and fluidity of the plasma membrane. Inhibits the incorporation of membrane-fluidizing phospholipids containing omega-3 long-chain polyunsaturated fatty acids (LCPUFA) and thereby promotes membrane rigidity. Does not appear to have any effect on LCPUFA synthesis. The protein is TLC domain-containing protein fld-1 of Caenorhabditis elegans.